The following is a 356-amino-acid chain: Alanine racemase, catabolic (356 aa).

Lys35 serves as the catalytic Proton acceptor; specific for D-alanine. An N6-(pyridoxal phosphate)lysine modification is found at Lys35. A substrate-binding site is contributed by Arg130. Tyr253 serves as the catalytic Proton acceptor; specific for L-alanine. A substrate-binding site is contributed by Met301.

Belongs to the alanine racemase family. It depends on pyridoxal 5'-phosphate as a cofactor.

The catalysed reaction is L-alanine = D-alanine. Isomerizes L-alanine to D-alanine which is then oxidized to pyruvate by DadA. This Escherichia coli (strain K12) protein is Alanine racemase, catabolic (dadX).